A 65-amino-acid polypeptide reads, in one-letter code: MKEKNMKKNDTIELQLGKYLEDDMIELAEGDESHGGTTPATPAISILSAYISTNTCPTTKCTRAC.

Positions 1-36 are excised as a propeptide; it reads MKEKNMKKNDTIELQLGKYLEDDMIELAEGDESHGG. Thr37 is modified (2-oxobutanoic acid). A 2,3-didehydrobutyrine mark is found at Thr38 and Thr41. A 2,3-didehydroalanine (Ser) mark is found at Ser45 and Ser48. The lanthionine (Ser-Cys) cross-link spans 52–56; that stretch reads STNTC. 2 cross-links (beta-methyllanthionine (Thr-Cys)) span residues 58–61 and 62–65; these read TTKC and TRAC.

Maturation of lantibiotics involves the enzymatic conversion of Thr, and Ser into dehydrated AA and the formation of thioether bonds with cysteine. This is followed by membrane translocation and cleavage of the modified precursor. Post-translationally, it is not established whether the 2,3-didehydrobutyrines are the E- or Z-isomers. In the NMR model they were assumed to be the Z-isomer.

It localises to the secreted. Functionally, lanthionine-containing peptide antibiotic (lantibiotic) active on Gram-positive bacteria. The bactericidal activity of lantibiotics is based on depolarization of energized bacterial cytoplasmic membranes, initiated by the formation of aqueous transmembrane pores. When present individually lacticin 3147 A2 exhibits weak activity towards L.lactis strain AM2 and L.lactis strain HP, and no activity towards L.lactis strain IFPL359, but when combined with lacticin 3147 A1 it displays strong activity towards all three strains. This is Lantibiotic lacticin 3147 A2 from Lactococcus lactis subsp. lactis (Streptococcus lactis).